Here is an 87-residue protein sequence, read N- to C-terminus: Kawaguchipeptin peptide (87 aa).

The propeptide occupies 1–33; it reads MKNPTLLPKLTAPVERPAVTSSDLKQASSVDAA. Trp-34 carries the 3'-prenyl-2',N2-cyclotryptophan; partial lipid modification. The segment at residues 34–44 is a cross-link (cyclopeptide (Trp-Pro)); that stretch reads WLNGDNNWSTP. D-leucine; partial is present on Leu-35. Trp-41 is lipidated: 3'-prenyl-2',N2-cyclotryptophan; partial. A propeptide spanning residues 45-51 is cleaved from the precursor; sequence FAGVNAA. Residue Trp-52 is the site of 3'-prenyl-2',N2-cyclotryptophan; partial attachment. The segment at residues 52–62 is a cross-link (cyclopeptide (Trp-Pro)); the sequence is WLNGDNNWSTP. Leu-53 carries the D-leucine; partial modification. A lipid anchor (3'-prenyl-2',N2-cyclotryptophan; partial) is attached at Trp-59. Residues 63–69 constitute a propeptide that is removed on maturation; that stretch reads FAGVNAA. Trp-70 carries 3'-prenyl-2',N2-cyclotryptophan; partial lipidation. The segment at residues 70–80 is a cross-link (cyclopeptide (Trp-Pro)); that stretch reads WLNGDNNWSTP. Leu-71 is subject to D-leucine; partial. Trp-77 carries the 3'-prenyl-2',N2-cyclotryptophan; partial lipid modification. Positions 81 to 87 are excised as a propeptide; it reads FAADGAE.

Kawaguchipeptin A contains a D-Leu and 2 prenylated Trp, whereas kawaguchipeptin B only contains unmodified amino acids. Post-translationally, kawaguchipeptin A is prenylated in vivo. Upon expression in E.coli of the whole operon, Trp residues are prenylated by C-prenyltransferase KgpF. Prenylation by KgpF is likely the last enzymatic step in the biosynthetic maturation of kawaguchipeptin A.

In terms of biological role, both kawaguchipeptin A and B, which only differ by post-translational modifications, have antibacterial activities, since they inhibit the growth of the Gram-positive bacterium S.aureus at a concentration of 1 ug/mL. The sequence is that of Kawaguchipeptin peptide from Microcystis aeruginosa (strain NIES-88 / KW-MA1-3).